Consider the following 767-residue polypeptide: Cap-specific mRNA (nucleoside-2'-O-)-methyltransferase 2 (767 aa).

The Adrift-type SAM-dependent 2'-O-MTase domain maps to 109–322; the sequence is ELCTQAWCKF…VYVVCLRYKG (214 aa). Residue lysine 117 is part of the active site. The S-adenosyl-L-methionine site is built by glycine 148, tryptophan 167, and aspartate 235. Aspartate 235 is a catalytic residue. Residue lysine 275 is the Proton acceptor of the active site.

The protein resides in the nucleus. It is found in the cytoplasm. It catalyses the reaction a 5'-end (N(7)-methyl 5'-triphosphoguanosine)-(2'-O-methyl-ribonucleoside)-(ribonucleotide) in mRNA + S-adenosyl-L-methionine = a 5'-end (N(7)-methyl 5'-triphosphoguanosine)-(2'-O-methyl-ribonucleoside)-(2'-O-methyl-ribonucleotide) in mRNA + S-adenosyl-L-homocysteine + H(+). S-adenosyl-L-methionine-dependent methyltransferase that mediates mRNA cap2 2'-O-ribose methylation to the 5'-cap structure of mRNAs. Methylates the ribose of the second nucleotide of a m(7)GpppG-capped mRNA and small nuclear RNA (snRNA) (cap0) to produce m(7)GpppRmpNm (cap2). Recognizes a guanosine cap on RNA independently of its N(7) methylation status. Display cap2 methylation on both cap0 and cap1. Displays a preference for cap1 RNAs. This is Cap-specific mRNA (nucleoside-2'-O-)-methyltransferase 2 (Cmtr2) from Mus musculus (Mouse).